A 414-amino-acid chain; its full sequence is Putative competence-damage inducible protein (414 aa).

The protein belongs to the CinA family.

This is Putative competence-damage inducible protein from Clostridium novyi (strain NT).